The following is a 148-amino-acid chain: Large ribosomal subunit protein bL9 (148 aa).

It belongs to the bacterial ribosomal protein bL9 family.

Functionally, binds to the 23S rRNA. The polypeptide is Large ribosomal subunit protein bL9 (Staphylococcus epidermidis (strain ATCC 35984 / DSM 28319 / BCRC 17069 / CCUG 31568 / BM 3577 / RP62A)).